A 468-amino-acid chain; its full sequence is Cysteine--tRNA ligase (468 aa).

Residue Cys27 participates in Zn(2+) binding. A 'HIGH' region motif is present at residues 29–39 (PTVYNYFHIGN). Positions 207, 232, and 236 each coordinate Zn(2+). Positions 264-268 (KMAKS) match the 'KMSKS' region motif. Lys267 contributes to the ATP binding site.

The protein belongs to the class-I aminoacyl-tRNA synthetase family. As to quaternary structure, monomer. Zn(2+) is required as a cofactor.

It localises to the cytoplasm. The catalysed reaction is tRNA(Cys) + L-cysteine + ATP = L-cysteinyl-tRNA(Cys) + AMP + diphosphate. This Acetivibrio thermocellus (strain ATCC 27405 / DSM 1237 / JCM 9322 / NBRC 103400 / NCIMB 10682 / NRRL B-4536 / VPI 7372) (Clostridium thermocellum) protein is Cysteine--tRNA ligase.